The following is a 197-amino-acid chain: Nucleoside triphosphate pyrophosphatase (197 aa).

Asp71 serves as the catalytic Proton acceptor.

The protein belongs to the Maf family. The cofactor is a divalent metal cation.

The protein resides in the cytoplasm. The enzyme catalyses a ribonucleoside 5'-triphosphate + H2O = a ribonucleoside 5'-phosphate + diphosphate + H(+). The catalysed reaction is a 2'-deoxyribonucleoside 5'-triphosphate + H2O = a 2'-deoxyribonucleoside 5'-phosphate + diphosphate + H(+). In terms of biological role, nucleoside triphosphate pyrophosphatase. May have a dual role in cell division arrest and in preventing the incorporation of modified nucleotides into cellular nucleic acids. The chain is Nucleoside triphosphate pyrophosphatase from Synechococcus sp. (strain JA-3-3Ab) (Cyanobacteria bacterium Yellowstone A-Prime).